The chain runs to 560 residues: DNA-directed primase/polymerase protein (560 aa).

Positions 1-22 (MNRKWEAKLKQIEERASHYERK) form a coiled coil. Residues R76, 114–116 (DLE), and 165–169 (KFSRH) each bind substrate. Positions 114 and 116 each coordinate Mn(2+). A disordered region spans residues 203–223 (EDDDSAPETTGHGFPHFSEAP). S255 bears the Phosphoserine mark. Substrate is bound by residues 288 to 291 (RNFR) and K297. Positions 419, 426, 446, and 451 each coordinate Zn(2+). The Zinc knuckle motif motif lies at 419 to 452 (CENIGRAHKSNNIMILVDLKNEVWYQKCHDPVCK). A disordered region spans residues 480-507 (TTDEADETRSNETQNPHKPSPSRLSTGA). The interaction with RPA1 stretch occupies residues 481 to 560 (TDEADETRSN…DELIIEVLQE (80 aa)). Residues 490–507 (NETQNPHKPSPSRLSTGA) show a composition bias toward polar residues. 2 short sequence motifs (RPA1-binding motif) span residues 513 to 527 (WDNGIDDAYFLEATE) and 548 to 556 (EIPDELIIE).

This sequence belongs to the eukaryotic-type primase small subunit family. As to quaternary structure, interacts with RPA1; leading to recruitment to chromatin and stimulate DNA primase activity. Interacts with SSBP1. Interacts with POLDIP2; leading to enhance DNA polymerase activity. Mn(2+) serves as cofactor.

Its subcellular location is the nucleus. The protein localises to the mitochondrion matrix. It is found in the chromosome. It catalyses the reaction ssDNA + n NTP = ssDNA/pppN(pN)n-1 hybrid + (n-1) diphosphate.. The enzyme catalyses DNA(n) + a 2'-deoxyribonucleoside 5'-triphosphate = DNA(n+1) + diphosphate. In terms of biological role, DNA primase and DNA polymerase required to tolerate replication-stalling lesions by bypassing them. Required to facilitate mitochondrial and nuclear replication fork progression by initiating de novo DNA synthesis using dNTPs and acting as an error-prone DNA polymerase able to bypass certain DNA lesions. Shows a high capacity to tolerate DNA damage lesions such as 8oxoG and abasic sites in DNA. Provides different translesion synthesis alternatives when DNA replication is stalled: able to synthesize DNA primers downstream of lesions, such as ultraviolet (UV) lesions, R-loops and G-quadruplexes, to allow DNA replication to continue. Can also realign primers ahead of 'unreadable lesions' such as abasic sites and 6-4 photoproduct (6-4 pyrimidine-pyrimidinone), thereby skipping the lesion. Repriming avoids fork degradation while leading to accumulation of internal ssDNA gaps behind the forks. Also able to incorporate nucleotides opposite DNA lesions such as 8oxoG, like a regular translesion synthesis DNA polymerase. Also required for reinitiating stalled forks after UV damage during nuclear DNA replication. Required for mitochondrial DNA (mtDNA) synthesis and replication, by reinitiating synthesis after UV damage or in the presence of chain-terminating nucleotides. Prevents APOBEC family-mediated DNA mutagenesis by repriming downstream of abasic site to prohibit error-prone translesion synthesis. Has non-overlapping function with POLH. In addition to its role in DNA damage response, also required to maintain efficient nuclear and mitochondrial DNA replication in unperturbed cells. The polypeptide is DNA-directed primase/polymerase protein (Homo sapiens (Human)).